A 275-amino-acid chain; its full sequence is Large ribosomal subunit protein uL2 (275 aa).

Disordered regions lie at residues 1 to 20 (MAVK…TTAD) and 214 to 275 (WLGR…TRRK). The span at 255–275 (KGLKTRRKRKTSDRFIVTRRK) shows a compositional bias: basic residues.

Belongs to the universal ribosomal protein uL2 family. As to quaternary structure, part of the 50S ribosomal subunit. Forms a bridge to the 30S subunit in the 70S ribosome.

Functionally, one of the primary rRNA binding proteins. Required for association of the 30S and 50S subunits to form the 70S ribosome, for tRNA binding and peptide bond formation. It has been suggested to have peptidyltransferase activity; this is somewhat controversial. Makes several contacts with the 16S rRNA in the 70S ribosome. This chain is Large ribosomal subunit protein uL2 (rplB), found in Deinococcus radiodurans (strain ATCC 13939 / DSM 20539 / JCM 16871 / CCUG 27074 / LMG 4051 / NBRC 15346 / NCIMB 9279 / VKM B-1422 / R1).